A 699-amino-acid polypeptide reads, in one-letter code: D-(-)-3-hydroxybutyrate oligomer hydrolase (699 aa).

Positions 1-33 (MTAIRGGSRRAPGLALALLGGVLLGACHGDENA) are cleaved as a signal peptide. Serine 311 serves as the catalytic Charge relay system.

This sequence belongs to the D-(-)-3-hydroxybutyrate oligomer hydrolase family.

The protein resides in the secreted. The enzyme catalyses (3R)-hydroxybutanoate dimer + H2O = 2 (R)-3-hydroxybutanoate + H(+). It participates in lipid metabolism; butanoate metabolism. Its function is as follows. Participates in the degradation of poly-3-hydroxybutyrate (PHB). It works downstream of poly(3-hydroxybutyrate) depolymerase, hydrolyzing D(-)-3-hydroxybutyrate oligomers of various length (3HB-oligomers) into 3HB-monomers. The polypeptide is D-(-)-3-hydroxybutyrate oligomer hydrolase (Burkholderia mallei (strain ATCC 23344)).